A 131-amino-acid chain; its full sequence is Small ribosomal subunit protein uS8 (131 aa).

The protein belongs to the universal ribosomal protein uS8 family. As to quaternary structure, part of the 30S ribosomal subunit. Contacts proteins S5 and S12.

In terms of biological role, one of the primary rRNA binding proteins, it binds directly to 16S rRNA central domain where it helps coordinate assembly of the platform of the 30S subunit. This chain is Small ribosomal subunit protein uS8, found in Nitrosomonas europaea (strain ATCC 19718 / CIP 103999 / KCTC 2705 / NBRC 14298).